Here is a 719-residue protein sequence, read N- to C-terminus: Serine/threonine-protein kinase PAK 5 (719 aa).

Disordered regions lie at residues 1–28 (MFGK…FDPQ), 96–118 (RSNS…RIQG), 226–245 (SPLD…TSRC), 253–298 (SESD…PMMP), and 339–372 (VFSP…GSHQ). The region spanning 11–24 (ISGPSNFEHRVHTG) is the CRIB domain. The interval 25–448 (FDPQEQKFTG…VVSPGDPREY (424 aa)) is linker. Position 104 is a phosphoserine (serine 104). Phosphothreonine is present on threonine 107. A compositionally biased stretch (polar residues) spans 226-244 (SPLDYSFQLTPSRTAGTSR). The segment covering 357–372 (LPQSQSKAGYSSGSHQ) has biased composition (polar residues). The 252-residue stretch at 449-700 (LDNFIKIGEG…AQELLGHPFL (252 aa)) folds into the Protein kinase domain. ATP contacts are provided by residues 455 to 463 (IGEGSTGIV) and lysine 478. Catalysis depends on aspartate 568, which acts as the Proton acceptor.

The protein belongs to the protein kinase superfamily. STE Ser/Thr protein kinase family. STE20 subfamily. In terms of assembly, interacts tightly with GTP-bound but not GDP-bound CDC42/p21 and RAC1. Interacts with MARK2, leading to inhibit MARK2 independently of kinase activity. Interacts with RHOD and RHOH. Autophosphorylated when activated by CDC42/p21. Highly expressed in brain and eye. Also expressed in adrenal gland, pancreas, prostate and testes. Within the brain, expression is restricted to neurons. Present in brain but not in kidney, lung and spleen (at protein level).

The protein localises to the mitochondrion. It localises to the cytoplasm. Its subcellular location is the nucleus. It catalyses the reaction L-seryl-[protein] + ATP = O-phospho-L-seryl-[protein] + ADP + H(+). The enzyme catalyses L-threonyl-[protein] + ATP = O-phospho-L-threonyl-[protein] + ADP + H(+). Functionally, serine/threonine protein kinase that plays a role in a variety of different signaling pathways including cytoskeleton regulation, cell migration, proliferation or cell survival. Activation by various effectors including growth factor receptors or active CDC42 and RAC1 results in a conformational change and a subsequent autophosphorylation on several serine and/or threonine residues. Phosphorylates the proto-oncogene RAF1 and stimulates its kinase activity. Promotes cell survival by phosphorylating the BCL2 antagonist of cell death BAD. Phosphorylates CTNND1, probably to regulate cytoskeletal organization and cell morphology. Keeps microtubules stable through MARK2 inhibition and destabilizes the F-actin network leading to the disappearance of stress fibers and focal adhesions. In Mus musculus (Mouse), this protein is Serine/threonine-protein kinase PAK 5.